Here is a 248-residue protein sequence, read N- to C-terminus: MAGHSQFKNIMHRKGRQDAVRSKMFSKLAREITVAAKAGLPDPAMNPRLRLAIQNAKAQSMPKDNIERAVKKAAGGDAETYEEVRYEGYGPAGVAVIVEALTDNRNRTASNVRSIFTKAGGALGETGSVSFSFDRVGEITYKLSVGDADTVMEAAIEAGADDVETDEEGHTITCGFEDIGEVSKALEGALGEAETVKAVWKPQNTVPVDEEKAQSLMKLIDNLEDDDDVQNVYSNFEVSEEVLAKLSA.

The protein belongs to the TACO1 family.

Its subcellular location is the cytoplasm. The sequence is that of Probable transcriptional regulatory protein Smed_2641 from Sinorhizobium medicae (strain WSM419) (Ensifer medicae).